We begin with the raw amino-acid sequence, 151 residues long: Group 10 secretory phospholipase A2 (151 aa).

The signal sequence occupies residues 1-17 (MLLLLLLLLLGPGPGFS). A propeptide spanning residues 18-28 (EATRRSHVYKR) is cleaved from the precursor. 8 disulfides stabilise this stretch: C39/C97, C53/C143, C55/C71, C70/C125, C76/C150, C77/C118, C86/C111, and C104/C116. Ca(2+) contacts are provided by Y54, G56, and G58. Residue H74 is part of the active site. Residue D75 participates in Ca(2+) binding. D119 is a catalytic residue.

Belongs to the phospholipase A2 family. Interacts with PLA2R1; this interaction mediates PLA2G10 clearance and inactivation. It depends on Ca(2+) as a cofactor. Expressed at high levels in testis and the gastrointestinal tract including stomach and colon. Expressed at lower levels in other tissues including small intestine, uterus, oviduct, lung, thymus, spleen and brain. Expressed in Paneth-like secretory epithelial cells of the colon. Expressed in gastric and ileac epithelial cells and in glandular epithelium of intestinal mucosa (at protein level). Expressed in late spermatogenic cells, spermatocytes and spermatids, but not spermatogonia in seminiferous tubules (at protein level). Expressed mainly in the apical side of endometrial epithelial cells and in the interstitium beneath the epithelium of uterus (at protein level). Expressed in resident spleen macrophages (at protein level). Expressed at outermost layer of hair follicles. Expressed in dorsal root ganglia in both NEFH-positive A-fibers and PRPH-positive C-fibers (at protein level).

It is found in the secreted. Its subcellular location is the lysosome. The protein localises to the cytoplasmic vesicle. The protein resides in the secretory vesicle. It localises to the acrosome. It carries out the reaction a 1,2-diacyl-sn-glycero-3-phosphocholine + H2O = a 1-acyl-sn-glycero-3-phosphocholine + a fatty acid + H(+). The catalysed reaction is 1-hexadecanoyl-2-(9Z-octadecenoyl)-sn-glycero-3-phosphocholine + H2O = 1-hexadecanoyl-sn-glycero-3-phosphocholine + (9Z)-octadecenoate + H(+). It catalyses the reaction 1-octadecanoyl-2-(5Z,8Z,11Z,14Z-eicosatetraenoyl)-sn-glycero-3-phosphocholine + H2O = 1-octadecanoyl-sn-glycero-3-phosphocholine + (5Z,8Z,11Z,14Z)-eicosatetraenoate + H(+). The enzyme catalyses 1,2-dihexadecanoyl-sn-glycero-3-phosphocholine + H2O = 1-hexadecanoyl-sn-glycero-3-phosphocholine + hexadecanoate + H(+). It carries out the reaction 1-hexadecanoyl-2-(9Z-octadecenoyl)-sn-glycero-3-phosphoglycerol + H2O = 1-hexadecanoyl-sn-glycero-3-phosphoglycerol + (9Z)-octadecenoate + H(+). The catalysed reaction is 1,2-dihexadecanoyl-sn-glycero-3-phospho-(1'-sn-glycerol) + H2O = 1-hexadecanoyl-sn-glycero-3-phospho-(1'-sn-glycerol) + hexadecanoate + H(+). It catalyses the reaction 1-hexadecanoyl-2-(9Z-octadecenoyl)-sn-glycero-3-phospho-L-serine + H2O = 1-hexadecanoyl-sn-glycero-3-phospho-L-serine + (9Z)-octadecenoate + H(+). The enzyme catalyses 1-hexadecanoyl-2-(9Z,12Z-octadecadienoyl)-sn-glycero-3-phosphoethanolamine + H2O = 1-hexadecanoyl-sn-glycero-3-phosphoethanolamine + (9Z,12Z)-octadecadienoate + H(+). It carries out the reaction 1-hexadecanoyl-2-(9Z-octadecenoyl)-sn-glycero-3-phosphate + H2O = 1-hexadecanoyl-sn-glycero-3-phosphate + (9Z)-octadecenoate + H(+). The catalysed reaction is 1-O-hexadecyl-2-acetyl-sn-glycero-3-phosphocholine + H2O = 1-O-hexadecyl-sn-glycero-3-phosphocholine + acetate + H(+). In terms of biological role, secretory calcium-dependent phospholipase A2 that primarily targets extracellular phospholipids. Hydrolyzes the ester bond of the fatty acyl group attached at sn-2 position of phospholipids with preference for phosphatidylcholines and phosphatidylglycerols over phosphatidylethanolamines. Preferentially releases sn-2 omega-6 and omega-3 polyunsaturated fatty acyl (PUFA) chains over saturated fatty acyls. Contributes to phospholipid remodeling of very low-density lipoprotein (VLDL), low-density lipoprotein (LDL) and high-density lipoprotein (HDL) particles. Hydrolyzes LDL phospholipids releasing unsaturated fatty acids that regulate macrophage differentiation toward foam cells. Efficiently hydrolyzes and inactivates PAF, a potent lipid mediator present in oxidized LDL. May act in an autocrine and paracrine manner. Secreted by lung epithelium, targets membrane phospholipids of infiltrating eosinophils, releasing arachidonate and boosting eicosanoid and cysteinyl leukotriene synthesis involved in airway inflammatory response. Secreted by gut epithelium, hydrolyzes dietary and biliary phosphatidylcholines in the gastrointestinal lumen, thereby regulating adipogenesis and body weight. Plays a stem cell regulator role in colon epithelium. Within intracellular compartment, mediates Paneth-like cell differentiation and its stem cell supporting functions by inhibiting Wnt signaling pathway in intestinal stem cell (ISC). Secreted in the intestinal lumen upon inflammation, acts in an autocrine way and promotes prostaglandin E2 synthesis that stimulates the Wnt signaling pathway in ISCs and tissue regeneration. May participate in hair follicle morphogenesis by regulating phosphatidylethanolamines metabolism at the outermost epithelial layer and facilitating melanin synthesis. By generating lysophosphatidylcholines (LPCs) at sperm acrosome controls sperm cell capacitation, acrosome reaction and overall fertility. May promote neurite outgrowth in neuron fibers involved in nociception. Contributes to lipid remodeling of cellular membranes and generation of lipid mediators involved in pathogen clearance. Cleaves sn-2 fatty acyl chains of phosphatidylglycerols and phosphatidylethanolamines, which are major components of membrane phospholipids in bacteria. Displays bactericidal activity against Gram-positive bacteria by directly hydrolyzing phospholipids of the bacterial membrane. In pulmonary epithelium, may contribute to host defense response against adenoviral infection. Prevents adenovirus entry into host cells by hydrolyzing host cell plasma membrane, releasing C16:0 LPCs that inhibit virus-mediated membrane fusion and viral infection. Likely prevents adenoviral entry into the endosomes of host cells. May play a role in maturation and activation of innate immune cells including macrophages, group 2 innate lymphoid cells and mast cells. This chain is Group 10 secretory phospholipase A2 (Pla2g10), found in Mus musculus (Mouse).